The sequence spans 415 residues: D-galactonate dehydratase family member RspA (415 aa).

Residues Asn-48 and His-133 each contribute to the substrate site. The active-site Proton donor/acceptor is the Tyr-170. Residue Asp-223 participates in Mg(2+) binding. The Proton donor/acceptor role is filled by His-225. Residues Glu-249 and Glu-275 each coordinate Mg(2+). Residues Glu-275, Arg-296, His-325, Asp-329, and Glu-352 each coordinate substrate.

The protein belongs to the mandelate racemase/muconate lactonizing enzyme family. GalD subfamily. Mg(2+) serves as cofactor.

The enzyme catalyses D-mannonate = 2-dehydro-3-deoxy-D-gluconate + H2O. Functionally, has low D-mannonate dehydratase activity (in vitro), suggesting that this is not a physiological substrate and that it has no significant role in D-mannonate degradation in vivo. Has no detectable activity with a panel of 70 other acid sugars (in vitro). This chain is D-galactonate dehydratase family member RspA (rspA), found in Escherichia coli (strain MS 21-1).